The primary structure comprises 935 residues: GPI ethanolamine phosphate transferase 1 (935 aa).

The Cytoplasmic portion of the chain corresponds to methionine 1–leucine 5. A helical membrane pass occupies residues leucine 6 to valine 26. Residues threonine 27–arginine 449 are Lumenal-facing. N-linked (GlcNAc...) asparagine glycans are attached at residues asparagine 86, asparagine 134, asparagine 315, and asparagine 398. A helical transmembrane segment spans residues serine 450–leucine 470. The Cytoplasmic segment spans residues asparagine 471 to serine 483. Residues valine 484–isoleucine 503 traverse the membrane as a helical segment. The Lumenal segment spans residues glutamine 504–phenylalanine 509. A helical transmembrane segment spans residues tyrosine 510 to asparagine 530. Residues threonine 531–glycine 547 lie on the Cytoplasmic side of the membrane. The helical transmembrane segment at phenylalanine 548–valine 568 threads the bilayer. The Lumenal segment spans residues tyrosine 569–glycine 576. Residues phenylalanine 577 to phenylalanine 597 traverse the membrane as a helical segment. At serine 598 to lysine 600 the chain is on the cytoplasmic side. A helical membrane pass occupies residues threonine 601 to valine 621. Residues asparagine 622–serine 626 are Lumenal-facing. The helical transmembrane segment at leucine 627–tyrosine 647 threads the bilayer. The Cytoplasmic segment spans residues arginine 648 to glutamine 663. A helical transmembrane segment spans residues leucine 664–serine 684. Residues leucine 685 to asparagine 688 lie on the Lumenal side of the membrane. A helical transmembrane segment spans residues isoleucine 689–isoleucine 709. Over proline 710–cysteine 737 the chain is Cytoplasmic. A helical transmembrane segment spans residues methionine 738–tryptophan 758. Over methionine 759–arginine 792 the chain is Lumenal. A helical membrane pass occupies residues isoleucine 793–serine 813. Residues leucine 814 to glycine 835 lie on the Cytoplasmic side of the membrane. Residues alanine 836–methionine 856 traverse the membrane as a helical segment. Residues asparagine 857–glutamine 865 are Lumenal-facing. The helical transmembrane segment at valine 866–valine 886 threads the bilayer. Over lysine 887–aspartate 894 the chain is Cytoplasmic. A helical membrane pass occupies residues isoleucine 895–leucine 915. At glutamate 916–asparagine 935 the chain is on the lumenal side. Residue asparagine 925 is glycosylated (N-linked (GlcNAc...) asparagine).

This sequence belongs to the PIGG/PIGN/PIGO family. PIGN subfamily.

The protein resides in the endoplasmic reticulum membrane. It functions in the pathway glycolipid biosynthesis; glycosylphosphatidylinositol-anchor biosynthesis. Ethanolamine phosphate transferase involved in glycosylphosphatidylinositol-anchor biosynthesis. Transfers ethanolamine phosphate to the first alpha-1,4-linked mannose of the glycosylphosphatidylinositol precursor of GPI-anchor. The chain is GPI ethanolamine phosphate transferase 1 (its8) from Schizosaccharomyces pombe (strain 972 / ATCC 24843) (Fission yeast).